The following is a 280-amino-acid chain: CAG pathogenicity island protein 12 (280 aa).

The N-terminal stretch at 1 to 20 is a signal peptide; the sequence is MKLRASVLIGATILCLILSA. The N-palmitoyl cysteine moiety is linked to residue Cys-21. Residue Cys-21 is the site of S-diacylglycerol cysteine attachment.

It is found in the cell membrane. The sequence is that of CAG pathogenicity island protein 12 (cagT) from Helicobacter pylori (strain ATCC 700392 / 26695) (Campylobacter pylori).